A 172-amino-acid chain; its full sequence is Adenine phosphoribosyltransferase (172 aa).

The protein belongs to the purine/pyrimidine phosphoribosyltransferase family. As to quaternary structure, homodimer.

It localises to the cytoplasm. The enzyme catalyses AMP + diphosphate = 5-phospho-alpha-D-ribose 1-diphosphate + adenine. It functions in the pathway purine metabolism; AMP biosynthesis via salvage pathway; AMP from adenine: step 1/1. Catalyzes a salvage reaction resulting in the formation of AMP, that is energically less costly than de novo synthesis. The protein is Adenine phosphoribosyltransferase of Staphylococcus aureus (strain bovine RF122 / ET3-1).